A 105-amino-acid chain; its full sequence is Large ribosomal subunit protein bL21c (105 aa).

The protein belongs to the bacterial ribosomal protein bL21 family. In terms of assembly, part of the 50S ribosomal subunit.

It localises to the plastid. The protein localises to the chloroplast. This protein binds to 23S rRNA. The polypeptide is Large ribosomal subunit protein bL21c (Trieres chinensis (Marine centric diatom)).